The primary structure comprises 249 residues: T-cell immunoreceptor with Ig and ITIM domains (249 aa).

The first 28 residues, 1–28 (MHGWLLLVWVQGLIQAAFLATAIGATAG), serve as a signal peptide directing secretion. An Ig-like V-type domain is found at 29–127 (TIDTKRNISA…GGIYKGRIFL (99 aa)). Topologically, residues 29 to 148 (TIDTKRNISA…LAQFQTAPLG (120 aa)) are extracellular. The homodimerization stretch occupies residues 35–45 (NISAEEGGSVI). An intrachain disulfide couples Cys48 to Cys111. N-linked (GlcNAc...) asparagine glycosylation occurs at Asn104. Residues 149 to 169 (GTMAAVLGLICLMVTGVTVLA) traverse the membrane as a helical segment. Topologically, residues 170–249 (RKDKSIRMHS…ESFIAVSKTG (80 aa)) are cytoplasmic. The tract at residues 182 to 222 (SGLGRTEAEPQEWNLRSLSSPGSPVQTQTAPAGPCGEQAED) is disordered. Residues 195 to 211 (NLRSLSSPGSPVQTQTA) are compositionally biased toward polar residues. An ITIM motif motif is present at residues 234–239 (LSYRSL).

Homodimer in cis; binds with high affinity to PVR, forming a heterotetrameric assembly of two TIGIT and two PVR molecules. Binds with lower affinity to NECTIN2 and NECTIN3. Interacts with GRB2. Interacts with NECTIN4.

The protein localises to the cell membrane. Inhibitory receptor that plays a role in the modulation of immune responses. Suppresses T-cell activation by promoting the generation of mature immunoregulatory dendritic cells. Upon binding to its ligands PVR/CD155 or NECTIN2/CD112, which are expressed on antigen-presenting cells, sends inhibitory signals to the T-cell or NK cell. Mechanistically, interaction with ligand leads to phosphorylation of the cytoplasmic tail by Src family tyrosine kinases such as FYN or LCK, allowing subsequent binding to adapter GRB2 and SHIP1/INPP5D. In turn, inhibits PI3K and MAPK signaling cascades. In addition, associates with beta-arrestin-2/ARRB2 to recruit SHIP1/INPP5D that suppresses autoubiquitination of TRAF6 and subsequently inhibits NF-kappa-B signaling pathway. Also acts as a receptor for NECTIN4 to inhibit NK cell cytotoxicity. In Mus musculus (Mouse), this protein is T-cell immunoreceptor with Ig and ITIM domains.